The following is a 158-amino-acid chain: NAD(P)H-quinone oxidoreductase subunit J, chloroplastic (158 aa).

It belongs to the complex I 30 kDa subunit family. In terms of assembly, NDH is composed of at least 16 different subunits, 5 of which are encoded in the nucleus.

The protein resides in the plastid. Its subcellular location is the chloroplast thylakoid membrane. The enzyme catalyses a plastoquinone + NADH + (n+1) H(+)(in) = a plastoquinol + NAD(+) + n H(+)(out). The catalysed reaction is a plastoquinone + NADPH + (n+1) H(+)(in) = a plastoquinol + NADP(+) + n H(+)(out). Its function is as follows. NDH shuttles electrons from NAD(P)H:plastoquinone, via FMN and iron-sulfur (Fe-S) centers, to quinones in the photosynthetic chain and possibly in a chloroplast respiratory chain. The immediate electron acceptor for the enzyme in this species is believed to be plastoquinone. Couples the redox reaction to proton translocation, and thus conserves the redox energy in a proton gradient. This Jasminum nudiflorum (Winter jasmine) protein is NAD(P)H-quinone oxidoreductase subunit J, chloroplastic.